The primary structure comprises 287 residues: Nucleotide-binding protein Dtpsy_0831 (287 aa).

ATP is bound at residue 10-17 (GMSGSGKS). 59–62 (DVRS) is a binding site for GTP.

It belongs to the RapZ-like family.

In terms of biological role, displays ATPase and GTPase activities. This Acidovorax ebreus (strain TPSY) (Diaphorobacter sp. (strain TPSY)) protein is Nucleotide-binding protein Dtpsy_0831.